A 183-amino-acid polypeptide reads, in one-letter code: Dual-action ribosomal maturation protein DarP (183 aa).

It belongs to the DarP family.

The protein localises to the cytoplasm. Member of a network of 50S ribosomal subunit biogenesis factors which assembles along the 30S-50S interface, preventing incorrect 23S rRNA structures from forming. Promotes peptidyl transferase center (PTC) maturation. This Citrobacter koseri (strain ATCC BAA-895 / CDC 4225-83 / SGSC4696) protein is Dual-action ribosomal maturation protein DarP.